We begin with the raw amino-acid sequence, 249 residues long: Uridylate kinase (249 aa).

19 to 22 is a binding site for ATP; sequence KLSG. UMP is bound at residue Gly-61. ATP is bound by residues Gly-62 and Arg-66. UMP is bound by residues Asp-81 and 142 to 149; that span reads TGNPYFTT. Thr-169, Tyr-175, and Asp-178 together coordinate ATP.

Belongs to the UMP kinase family. Homohexamer.

Its subcellular location is the cytoplasm. The enzyme catalyses UMP + ATP = UDP + ADP. The protein operates within pyrimidine metabolism; CTP biosynthesis via de novo pathway; UDP from UMP (UMPK route): step 1/1. With respect to regulation, inhibited by UTP. Catalyzes the reversible phosphorylation of UMP to UDP. This chain is Uridylate kinase, found in Anaeromyxobacter sp. (strain Fw109-5).